A 501-amino-acid polypeptide reads, in one-letter code: CaM kinase-like vesicle-associated protein (501 aa).

A Protein kinase domain is found at Tyr24–Ile286. The disordered stretch occupies residues Arg327–Ser501. Residues Gln331–Ala365 are compositionally biased toward low complexity. Polar residues predominate over residues Thr387–Pro428. Thr435 is subject to Phosphothreonine. Residues Thr438 to Met451 show a composition bias toward polar residues. Thr459 carries the post-translational modification Phosphothreonine.

This sequence belongs to the protein kinase superfamily. CAMK Ser/Thr protein kinase family. As to quaternary structure, interacts with calmodulin, in the presence of calcium. Ca(2+) serves as cofactor.

Its subcellular location is the cell membrane. It is found in the cytoplasmic vesicle membrane. In terms of biological role, does not appear to have detectable kinase activity. The chain is CaM kinase-like vesicle-associated protein (CAMKV) from Homo sapiens (Human).